Here is a 278-residue protein sequence, read N- to C-terminus: PILR alpha-associated neural protein (278 aa).

A signal peptide spans 1-27 (MWSAQLLSQLLPLWPLLLLSVLPPAQG). The interval 25–93 (AQGSSHRSPP…PSGFEEGPPS (69 aa)) is disordered. At 28-174 (SSHRSPPAPA…FGGRGEGVDP (147 aa)) the chain is on the extracellular side. Residue T136 is glycosylated (O-linked (GalNAc...) threonine). The chain crosses the membrane as a helical span at residues 175 to 195 (QLYVTITISIIIVLVATGIIF). Over 196 to 278 (KFCWDRSQKR…QLNRIPLVNL (83 aa)) the chain is Cytoplasmic. The segment at 206 to 278 (RRPSGQQGAL…QLNRIPLVNL (73 aa)) is disordered. Polar residues predominate over residues 209–225 (SGQQGALRQEESQQPLT).

Post-translationally, O-glycosylation at Thr-136 is essential for recognition by PILRA. As to expression, mainly expressed in brain and spinal cord. Weak expression also detected in heart, kidney, spleen and lymph node. Virtually no expression detected in liver and embryo relative to brain.

The protein localises to the membrane. Acts as a ligand for PILRA in neuronal tissues, where it may be involved in immune regulation. This chain is PILR alpha-associated neural protein (Pianp), found in Mus musculus (Mouse).